A 271-amino-acid chain; its full sequence is ATP synthase subunit a (271 aa).

5 helical membrane-spanning segments follow: residues 47–67 (WENIIFAILVASLISLVAYLG), 107–127 (FLGTLFIYIFTMNIFGMVPLM), 133–153 (SLNITAALAICVFCLVQFLNI), 209–229 (ILIGTFALMGVVMISSVETFV), and 235–255 (LPFMFLGLLTSFMQALVFTLL).

Belongs to the ATPase A chain family. F-type ATPases have 2 components, CF(1) - the catalytic core - and CF(0) - the membrane proton channel. CF(1) has five subunits: alpha(3), beta(3), gamma(1), delta(1), epsilon(1). CF(0) has three main subunits: a(1), b(2) and c(9-12). The alpha and beta chains form an alternating ring which encloses part of the gamma chain. CF(1) is attached to CF(0) by a central stalk formed by the gamma and epsilon chains, while a peripheral stalk is formed by the delta and b chains.

It is found in the cell inner membrane. Functionally, key component of the proton channel; it plays a direct role in the translocation of protons across the membrane. The protein is ATP synthase subunit a of Protochlamydia amoebophila (strain UWE25).